The primary structure comprises 129 residues: Small ribosomal subunit protein uS11c (129 aa).

It belongs to the universal ribosomal protein uS11 family. As to quaternary structure, part of the 30S ribosomal subunit.

The protein localises to the plastid. It is found in the chloroplast. This chain is Small ribosomal subunit protein uS11c, found in Gracilaria tenuistipitata var. liui (Red alga).